Consider the following 505-residue polypeptide: L-arabinose isomerase (505 aa).

Residues glutamate 310, glutamate 337, histidine 354, and histidine 453 each contribute to the Mn(2+) site.

This sequence belongs to the arabinose isomerase family. It depends on Mn(2+) as a cofactor.

It carries out the reaction beta-L-arabinopyranose = L-ribulose. Its pathway is carbohydrate degradation; L-arabinose degradation via L-ribulose; D-xylulose 5-phosphate from L-arabinose (bacterial route): step 1/3. In terms of biological role, catalyzes the conversion of L-arabinose to L-ribulose. In Clavibacter sepedonicus (Clavibacter michiganensis subsp. sepedonicus), this protein is L-arabinose isomerase.